Here is a 185-residue protein sequence, read N- to C-terminus: Protein GrpE (185 aa).

Residues 1-22 are disordered; sequence MTASQEPVDQAPESNEPAPAVP.

The protein belongs to the GrpE family. In terms of assembly, homodimer.

It is found in the cytoplasm. Participates actively in the response to hyperosmotic and heat shock by preventing the aggregation of stress-denatured proteins, in association with DnaK and GrpE. It is the nucleotide exchange factor for DnaK and may function as a thermosensor. Unfolded proteins bind initially to DnaJ; upon interaction with the DnaJ-bound protein, DnaK hydrolyzes its bound ATP, resulting in the formation of a stable complex. GrpE releases ADP from DnaK; ATP binding to DnaK triggers the release of the substrate protein, thus completing the reaction cycle. Several rounds of ATP-dependent interactions between DnaJ, DnaK and GrpE are required for fully efficient folding. The protein is Protein GrpE of Bordetella petrii (strain ATCC BAA-461 / DSM 12804 / CCUG 43448).